The following is a 91-amino-acid chain: Small ribosomal subunit protein bS18 (91 aa).

This sequence belongs to the bacterial ribosomal protein bS18 family. In terms of assembly, part of the 30S ribosomal subunit. Forms a tight heterodimer with protein bS6.

Its function is as follows. Binds as a heterodimer with protein bS6 to the central domain of the 16S rRNA, where it helps stabilize the platform of the 30S subunit. This is Small ribosomal subunit protein bS18 from Wolbachia sp. subsp. Brugia malayi (strain TRS).